Reading from the N-terminus, the 299-residue chain is Taste receptor type 2 member 1 (299 aa).

The Extracellular portion of the chain corresponds to Met-1–Tyr-9. The helical transmembrane segment at Phe-10–Val-30 threads the bilayer. Residues Asn-31–Arg-55 are Cytoplasmic-facing. A helical membrane pass occupies residues Ile-56–Ile-76. The Extracellular portion of the chain corresponds to Met-77–Asn-81. Residues Cys-82 to Phe-102 traverse the membrane as a helical segment. Over Tyr-103–Lys-124 the chain is Cytoplasmic. A helical transmembrane segment spans residues Leu-125–Ser-145. The Extracellular segment spans residues Lys-146–Ser-178. N-linked (GlcNAc...) asparagine glycosylation is present at Asn-163. A helical membrane pass occupies residues Phe-179–Phe-199. At Ser-200–Ala-222 the chain is on the cytoplasmic side. The chain crosses the membrane as a helical span at residues Pro-223–Ile-243. Topologically, residues Lys-244–Phe-257 are extracellular. A helical transmembrane segment spans residues Ile-258–Ile-278. Residues Leu-279–Gln-299 are Cytoplasmic-facing.

The protein belongs to the G-protein coupled receptor T2R family.

The protein localises to the membrane. Functionally, receptor that may play a role in the perception of bitterness and is gustducin-linked. May play a role in sensing the chemical composition of the gastrointestinal content. The activity of this receptor may stimulate alpha gustducin, mediate PLC-beta-2 activation and lead to the gating of TRPM5. This is Taste receptor type 2 member 1 (TAS2R1) from Pan paniscus (Pygmy chimpanzee).